The sequence spans 112 residues: UPF0122 protein CPF_1968 (112 aa).

Belongs to the UPF0122 family.

Its function is as follows. Might take part in the signal recognition particle (SRP) pathway. This is inferred from the conservation of its genetic proximity to ftsY/ffh. May be a regulatory protein. The polypeptide is UPF0122 protein CPF_1968 (Clostridium perfringens (strain ATCC 13124 / DSM 756 / JCM 1290 / NCIMB 6125 / NCTC 8237 / Type A)).